We begin with the raw amino-acid sequence, 506 residues long: MALLDTIELFSNFSLSGVFAGLVLASLLTTTYCIWNIFYNIYLHPLKGYPGPKFLTTSRLPYLKWMFSGTLVPNFQRLHEQYGPVVRVAPNELSYINPEALKTIYGHRQPGEGFRKNPAFFQPATNGVHSILTSEGDAHSSVRRKILPAFSDKALAEQQDILQHFTDLLIRKLRERVEASKSSEPVDMFEWYIWTTFDLIGDLAFGEPFNCLEAASFTEWVALVFNAFKTFAFINISKQLAPLDKLVRLMIPKSMKARQDKVFSLNVAKVDRRIASKADRPDFLSYIIKGKDGVAMALPELYANSTLLVLAGSESTASGLAGITFELLKHREAQKKAVEEIRSAFKTEDEIVPESVKRLPYLAAMVSEGLRMYPPFPEGLPRLTPRQGAQICGQWVPGGTYVQFSTHAAHRASANFTDPNVFAPERWLGDTKFASDIKEASQPFSIGPRSCIGRNLAYLEMRLILARMLWSFDMQLTPECEDWDDQNSWIQWDKKPLMVKLSLVKR.

A helical membrane pass occupies residues 18-38 (VFAGLVLASLLTTTYCIWNIF). Cysteine 451 is a heme binding site.

This sequence belongs to the cytochrome P450 family. Requires heme as cofactor.

The protein localises to the membrane. The enzyme catalyses 4-O-demethylbarbatate + reduced [NADPH--hemoprotein reductase] + O2 = proatranorin II + oxidized [NADPH--hemoprotein reductase] + H2O + H(+). It catalyses the reaction proatranorin II + reduced [NADPH--hemoprotein reductase] + O2 = proatranorin III + oxidized [NADPH--hemoprotein reductase] + 2 H2O + H(+). It carries out the reaction proatranorin I + reduced [NADPH--hemoprotein reductase] + O2 = proatranorin IV + oxidized [NADPH--hemoprotein reductase] + H2O + H(+). The catalysed reaction is proatranorin IV + reduced [NADPH--hemoprotein reductase] + O2 = atranorin + oxidized [NADPH--hemoprotein reductase] + 2 H2O + H(+). It participates in secondary metabolite biosynthesis; terpenoid biosynthesis. Cytochrome P450 monooxygenase; part of the gene cluster that mediates the biosynthesis of atranorin, a depside of polyketide origin that accumulates in the cortical or medullary layers of lichen thalli. Atr2 performs the oxidation at the C-9 position of 4-O-demethylbarbatic acid to yield proatranorin III via proatranorin II. Atr2 is also able to oxidize the atr3 product proatranorin I to produce the final compound atranorin. The first step in the pathway is performed by the non-reducing polyketide synthase atr1 that produces 4-O-demethylbarbatic acid composed of two 3-methylorsellinic acid (3MOA) moieties. The pathway continues with the actions of the cytochrome P450 monooygenase atr2 that catalizes the oxidation of c-9 and the O-methyltransferase atr3 that performs the methylation of the carboxyl group to yield atranorin, via the proatranorin II and III intermediates if atr2 acts first, or the proatranorin I intermediate if atr3 acts first. This is Cytochrome P450 monooxygenase atr2 from Stereocaulon alpinum (Alpine snow lichen).